Reading from the N-terminus, the 457-residue chain is NADH-quinone oxidoreductase subunit D (457 aa).

The tract at residues 1–23 (MSTHTETPVDGSAETITGAQPYE) is disordered.

Belongs to the complex I 49 kDa subunit family. In terms of assembly, NDH-1 is composed of 14 different subunits. Subunits NuoB, C, D, E, F, and G constitute the peripheral sector of the complex.

Its subcellular location is the cell membrane. The catalysed reaction is a quinone + NADH + 5 H(+)(in) = a quinol + NAD(+) + 4 H(+)(out). NDH-1 shuttles electrons from NADH, via FMN and iron-sulfur (Fe-S) centers, to quinones in the respiratory chain. The immediate electron acceptor for the enzyme in this species is believed to be a menaquinone. Couples the redox reaction to proton translocation (for every two electrons transferred, four hydrogen ions are translocated across the cytoplasmic membrane), and thus conserves the redox energy in a proton gradient. This chain is NADH-quinone oxidoreductase subunit D, found in Parafrankia sp. (strain EAN1pec).